Reading from the N-terminus, the 737-residue chain is MSQNIQIGTRKRSRANMNNSTTTGPANNTSSNKTFLDNFEETRTNKLLDEMFARQNSFLTDNLRNSLDLNQADNPLRPRQHQHQLFLDNENAIELDEEPRIINTTINNSNNHNSSRVDEDADDDIIFIKEQPIQFSSPLILPSSSSINNNNNIVTSNNPGCGTAATSNSTYITTPKKFKKQRTISLPQLPLSKLSYQSNYFNVPDQTNAIVPRVTQTENELLHLTGSCAKTLEGNKAVNLTIAHSTSPFSNPPAQIASLPQSNLKKQIGSSLRKFTSNGSSESASSNKSNFKTDKDGHYVYQENDIFGSGGRFVVKDLLGQGTFGKVLKCIDNKYEPNYVAVKVIRAVDRYREAAKTELRILQTILNNDPQGQFQCLLLRECFDYKNHICLVTDLYGRSIYDFMCSNGIARFPGSHIQAIARQLIRSVCFLHDLGIIHTDLKPENILICDETHIAQKLPLKTVQSLSKRRREASKGKRKILKNPEIKIIDFGSAIFHYEYHPPVISTRHYRAPEIVLGLGWSFPCDIWSIACVLVELVIGESLYPIHENLEHMAMMQRINGTPFPTDIIDKMFYKSKHKLGNSPSDLNSTVIKHFDRKTLSLQWPEKNKRGDTITTEKSMKRVLQSCDRLDIYISKVLKQDYGDSLSINWNLPPEKNWSLINSKLAWKRQTHSSSSSTTDELDKETFLFWYWFIDLLRKMFEFDPTKRITAKDALDHEWFNLGILDDGIATYNNTQG.

Disordered stretches follow at residues 1-33 (MSQNIQIGTRKRSRANMNNSTTTGPANNTSSNK) and 270-290 (SSLRKFTSNGSSESASSNKSN). Residues 15-33 (ANMNNSTTTGPANNTSSNK) show a composition bias toward polar residues. The segment covering 277–290 (SNGSSESASSNKSN) has biased composition (low complexity). The Protein kinase domain occupies 313 to 720 (FVVKDLLGQG…AKDALDHEWF (408 aa)). ATP is bound by residues 319 to 327 (LGQGTFGKV) and lysine 343. The active-site Proton acceptor is the aspartate 440. Threonine 562 carries the phosphothreonine modification.

It belongs to the protein kinase superfamily. CMGC Ser/Thr protein kinase family. Lammer subfamily. Post-translationally, phosphorylated (auto-) on Ser/Thr/Tyr.

It carries out the reaction L-seryl-[protein] + ATP = O-phospho-L-seryl-[protein] + ADP + H(+). The catalysed reaction is L-threonyl-[protein] + ATP = O-phospho-L-threonyl-[protein] + ADP + H(+). It catalyses the reaction L-tyrosyl-[protein] + ATP = O-phospho-L-tyrosyl-[protein] + ADP + H(+). Its function is as follows. Nonessential protein kinase. The chain is Dual specificity protein kinase KNS1 (KNS1) from Saccharomyces cerevisiae (strain ATCC 204508 / S288c) (Baker's yeast).